The following is a 132-amino-acid chain: Lectin OAA (132 aa).

2 consecutive repeat copies span residues 1–66 (ALYN…TLLG) and 67–132 (NNSY…GTTL). Residues 1-132 (ALYNVENQWG…GPIGFKGTTL (132 aa)) are 2 X approximate tandem repeats.

In terms of assembly, monomer.

Its function is as follows. Lectin specific for high mannose N-glycans, recognizes the branched moiety of these glycans. Does not recognize other types of N-glycans or monosaccharides. Agglutinates trypsin-treated rabbit erythrocytes. Does not require divalent cations for activity. Inhibits HIV replication in MT4 cells with an EC(50) of 45 nM. Binds to the HIV envelope glycoprotein gp120. This Planktothrix agardhii (Oscillatoria agardhii) protein is Lectin OAA.